The chain runs to 487 residues: MLRAPGCLLRTSVAPAAALAAALLSSLARCSLLEPRDPVASSLSPYFGTKTRYEDVNPVLLSGPEAPWRDPELLEGTCTPVQLVALIRHGTRYPTVKQIRKLRQLHGLLQARGSRDGGASSTGSRDLGAALADWPLWYADWMDGQLVEKGRQDMRQLALRLASLFPALFSRENYGRLRLITSSKHRCMDSSAAFLQGLWQHYHPGLPPPDVADMEFGPPTVNDKLMRFFDHCEKFLTEVEKNATALYHVEAFKTGPEMQNILKKVAATLQVPVNDLNADLIQVAFFTCSFDLAIKGVKSPWCDVFDIDDAKVLEYLNDLKQYWKRGYGYTINSRSSCTLFQDIFQHLDKAVEQKQRSQPISSPVILQFGHAETLLPLLSLMGYFKDKEPLTAYNYKKQMHRKFRSGLIVPYASNLIFVLYHCENAKTPKEQFRVQMLLNEKVLPLAYSQETVSFYEDLKNHYKDILQSCQTSEECELARANSTSDEL.

The first 30 residues, 1–30 (MLRAPGCLLRTSVAPAAALAAALLSSLARC), serve as a signal peptide directing secretion. The active site involves H89. N242 and N481 each carry an N-linked (GlcNAc...) asparagine glycan. The Prevents secretion from ER motif lies at 484–487 (SDEL).

This sequence belongs to the histidine acid phosphatase family. MINPP1 subfamily. N-glycosylated. As to expression, widely expressed with highest levels in kidney, liver, cerebellum and placenta.

The protein localises to the endoplasmic reticulum lumen. It localises to the secreted. The protein resides in the cell membrane. The catalysed reaction is 1D-myo-inositol hexakisphosphate + H2O = 1D-myo-inositol 1,2,4,5,6-pentakisphosphate + phosphate. The enzyme catalyses 1D-myo-inositol 1,2,4,5,6-pentakisphosphate + H2O = 1D-myo-inositol 1,2,5,6-tetrakisphosphate + phosphate. It carries out the reaction 1D-myo-inositol 1,2,5,6-tetrakisphosphate + H2O = 1D-myo-inositol 1,2,6-trisphosphate + phosphate. It catalyses the reaction 1D-myo-inositol 1,2,6-trisphosphate + H2O = 1D-myo-inositol 1,2-bisphosphate + phosphate. The catalysed reaction is 1D-myo-inositol 1,2-bisphosphate + H2O = 1D-myo-inositol 2-phosphate + phosphate. The enzyme catalyses 1D-myo-inositol hexakisphosphate + H2O = 1D-myo-inositol 1,2,3,5,6-pentakisphosphate + phosphate. It carries out the reaction 1D-myo-inositol 1,2,3,5,6-pentakisphosphate + H2O = 1D-myo-inositol 1,2,3,6-tetrakisphosphate + phosphate. It catalyses the reaction 1D-myo-inositol 1,2,3,6-tetrakisphosphate + H2O = 1D-myo-inositol 1,2,3-trisphosphate + phosphate. The catalysed reaction is 1D-myo-inositol 1,2,3-trisphosphate + H2O = 1D-myo-inositol 2,3-bisphosphate + phosphate. The enzyme catalyses 1D-myo-inositol 2,3-bisphosphate + H2O = 1D-myo-inositol 2-phosphate + phosphate. It carries out the reaction 1D-myo-inositol 1,3,4,5,6-pentakisphosphate + H2O = 1D-myo-inositol 1,4,5,6-tetrakisphosphate + phosphate. It catalyses the reaction 1D-myo-inositol 1,4,5,6-tetrakisphosphate + H2O = 1D-myo-inositol 1,4,5-trisphosphate + phosphate. The catalysed reaction is (2R)-2,3-bisphosphoglycerate + H2O = (2R)-2-phosphoglycerate + phosphate. In terms of biological role, multiple inositol polyphosphate phosphatase that hydrolyzes 1D-myo-inositol 1,3,4,5,6-pentakisphosphate (InsP5[2OH]) and 1D-myo-inositol hexakisphosphate (InsP6) to a range of less phosphorylated inositol phosphates. This regulates the availability of these various small molecule second messengers and metal chelators which control many aspects of cell physiology. Has a weak in vitro activity towards 1D-myo-inositol 1,4,5-trisphosphate which is unlikely to be physiologically relevant. By regulating intracellular inositol polyphosphates pools, which act as metal chelators, it may control the availability of intracellular calcium and iron, which are important for proper neuronal development and homeostasis. May have a dual substrate specificity, and function as a 2,3-bisphosphoglycerate 3-phosphatase hydrolyzing 2,3-bisphosphoglycerate to 2-phosphoglycerate. 2,3-bisphosphoglycerate (BPG) is formed as part of the Rapoport-Luebering glycolytic bypass and is a regulator of systemic oxygen homeostasis as the major allosteric effector of hemoglobin. This chain is Multiple inositol polyphosphate phosphatase 1, found in Homo sapiens (Human).